A 221-amino-acid chain; its full sequence is Interleukin-12 subunit alpha (221 aa).

Residues 1–25 (MCPLRSLLLISTLVLLHHLPHLSLG) form the signal peptide. Cystine bridges form between Cys39–Cys112, Cys66–Cys198, and Cys87–Cys125. A glycan (N-linked (GlcNAc...) asparagine) is linked at Asn95.

This sequence belongs to the IL-6 superfamily. Heterodimer with IL12B; disulfide-linked. This heterodimer is known as interleukin IL-12. Heterodimer with EBI3/IL27B; not disulfide-linked. This heterodimer is known as interleukin IL-35. Interacts with NBR1; this interaction promotes IL-12 secretion.

The protein resides in the secreted. Functionally, heterodimerizes with IL12B to form the IL-12 cytokine or with EBI3/IL27B to form the IL-35 cytokine. IL-12 is primarily produced by professional antigen-presenting cells (APCs) such as B-cells and dendritic cells (DCs) as well as macrophages and granulocytes and regulates T-cell and natural killer-cell responses, induces the production of interferon-gamma (IFN-gamma), favors the differentiation of T-helper 1 (Th1) cells and is an important link between innate resistance and adaptive immunity. Mechanistically, exerts its biological effects through a receptor composed of IL12R1 and IL12R2 subunits. Binding to the receptor results in the rapid tyrosine phosphorylation of a number of cellular substrates including the JAK family kinases TYK2 and JAK2. In turn, recruited STAT4 gets phosphorylated and translocates to the nucleus where it regulates cytokine/growth factor responsive genes. As part of IL-35, plays essential roles in maintaining the immune homeostasis of the liver microenvironment and also functions as an immune-suppressive cytokine. Mediates biological events through unconventional receptors composed of IL12RB2 and gp130/IL6ST heterodimers or homodimers. Signaling requires the transcription factors STAT1 and STAT4, which form a unique heterodimer that binds to distinct DNA sites. The protein is Interleukin-12 subunit alpha (IL12A) of Bos taurus (Bovine).